The following is a 340-amino-acid chain: MIPVINQEKQGISGDFRLSVAPMMNWTDRYCRVFHRVLAPSARLYTEMVHAKAVIYGDRERLLGFASVEQPVALQLGGSEPALLAKAARIAVDWGYSEINLNCGCPSDRVQAGSFGARLMREPALVADCVAAMAAVVSVPVTVKCRLGVNEDDDYGRFAKFVDWVSRASSSRMIVVHARNAWLQGLSPKENREIPPLRYDWVYRLKRERPELAVVLNGGITSVEAGLDHLLMVDGVMLGRAAYQDPYILHQFDCALSNAPLLPRALLLRALRPYVEVWLEQGLTLRHIVRHLFGLFHGQPGGRVFRQVLTQGGQRSDADWSLVEQALSIIEDQETYAAVV.

FMN contacts are provided by residues 22-24 (PMM) and Gln-75. The active-site Proton donor is the Cys-105. FMN-binding positions include Lys-144, His-177, 217–219 (NGG), and 239–240 (GR).

This sequence belongs to the Dus family. DusA subfamily. FMN is required as a cofactor.

It catalyses the reaction 5,6-dihydrouridine(20) in tRNA + NADP(+) = uridine(20) in tRNA + NADPH + H(+). It carries out the reaction 5,6-dihydrouridine(20) in tRNA + NAD(+) = uridine(20) in tRNA + NADH + H(+). The catalysed reaction is 5,6-dihydrouridine(20a) in tRNA + NADP(+) = uridine(20a) in tRNA + NADPH + H(+). The enzyme catalyses 5,6-dihydrouridine(20a) in tRNA + NAD(+) = uridine(20a) in tRNA + NADH + H(+). Catalyzes the synthesis of 5,6-dihydrouridine (D), a modified base found in the D-loop of most tRNAs, via the reduction of the C5-C6 double bond in target uridines. Specifically modifies U20 and U20a in tRNAs. In Xylella fastidiosa (strain 9a5c), this protein is tRNA-dihydrouridine(20/20a) synthase.